We begin with the raw amino-acid sequence, 279 residues long: tRNA (carboxymethyluridine(34)-5-O)-methyltransferase (279 aa).

The interval K172–E236 is disordered. Residues P200–Q229 show a composition bias toward basic and acidic residues.

In terms of assembly, interacts with TRM112.

The protein localises to the cytoplasm. It is found in the nucleus. The enzyme catalyses 5-(carboxymethyl)uridine(34) in tRNA + S-adenosyl-L-methionine = 5-(2-methoxy-2-oxoethyl)uridine(34) in tRNA + S-adenosyl-L-homocysteine. Its function is as follows. Required for the methylation of the wobble bases at position 34 in tRNA. Appears to have a role in stress-response. The polypeptide is tRNA (carboxymethyluridine(34)-5-O)-methyltransferase (TRM9) (Saccharomyces cerevisiae (strain ATCC 204508 / S288c) (Baker's yeast)).